Reading from the N-terminus, the 249-residue chain is Segregation and condensation protein A (249 aa).

It belongs to the ScpA family. Component of a cohesin-like complex composed of ScpA, ScpB and the Smc homodimer, in which ScpA and ScpB bind to the head domain of Smc. The presence of the three proteins is required for the association of the complex with DNA.

It is found in the cytoplasm. In terms of biological role, participates in chromosomal partition during cell division. May act via the formation of a condensin-like complex containing Smc and ScpB that pull DNA away from mid-cell into both cell halves. The protein is Segregation and condensation protein A of Listeria monocytogenes serotype 4b (strain CLIP80459).